Reading from the N-terminus, the 299-residue chain is Methionyl-tRNA formyltransferase (299 aa).

109–112 (SLLP) is a binding site for (6S)-5,6,7,8-tetrahydrofolate.

The protein belongs to the Fmt family.

It carries out the reaction L-methionyl-tRNA(fMet) + (6R)-10-formyltetrahydrofolate = N-formyl-L-methionyl-tRNA(fMet) + (6S)-5,6,7,8-tetrahydrofolate + H(+). In terms of biological role, attaches a formyl group to the free amino group of methionyl-tRNA(fMet). The formyl group appears to play a dual role in the initiator identity of N-formylmethionyl-tRNA by promoting its recognition by IF2 and preventing the misappropriation of this tRNA by the elongation apparatus. This Dinoroseobacter shibae (strain DSM 16493 / NCIMB 14021 / DFL 12) protein is Methionyl-tRNA formyltransferase.